Here is a 63-residue protein sequence, read N- to C-terminus: MRKPITLILVVALALVLLATSEVSAYRACGFPGRRCSPTEECCEGLVCQPRKNGPSMCYRPDP.

The N-terminal stretch at 1–25 (MRKPITLILVVALALVLLATSEVSA) is a signal peptide. Cystine bridges form between Cys29/Cys43, Cys36/Cys48, and Cys42/Cys58.

In terms of tissue distribution, expressed by the venom gland.

The protein resides in the secreted. The chain is Cysteine-rich venom protein 3 from Pimpla hypochondriaca (Parasitoid wasp).